The chain runs to 191 residues: Bcl-2-like protein 10 (191 aa).

The BH1 signature appears at 79–98 (LSKDQDFSWSQLVMLLAFAG). A Glycyl lysine isopeptide (Lys-Gly) (interchain with G-Cter in ubiquitin) cross-link involves residue lysine 112. A BH2 motif is present at residues 144–155 (RLEALGGWDGFC). The helical transmembrane segment at 166-183 (FWRRLLIQAFLSGFFATA) threads the bilayer.

Belongs to the Bcl-2 family. In terms of assembly, interacts with BAX. Interacts with BCL2 and BCL2L1/BCLX. Interacts with APAF1. Interacts with ITPR1, ITPR2 and ITPR3; the interaction with ITPR1 is increased in the presence of AHCLY1. Interacts with AHCYL1. Interacts with HIP1R (via ENTH and I/LWEQ domains). Interacts with CASP9. Interacts with BCL2L11/BIM. Interacts with BIK. Interacts with UBQLN4. Interacts with NME2/NM23-H2. Interacts with PMAIP1/NOXA. Interacts with TPX2. Interacts with UBQLN1; in the cytoplasm. Interacts (via BH1 domain) with BECN1. Ca(2+) is required as a cofactor. Monoubiquitinated by UBQLN1; results in stabilization of BCL2L10 protein abundance and in relocalization from mitochondria to cytoplasm. In terms of tissue distribution, expressed in multiple embryonic tissues. Restricted to the ovary and testis in adult mice.

It localises to the mitochondrion. The protein resides in the nucleus membrane. Its subcellular location is the endoplasmic reticulum. It is found in the cytoplasm. The protein localises to the cytoskeleton. It localises to the spindle. Its function is as follows. Promotes cell survival by suppressing apoptosis induced by BAX but not BAK. Increases binding of AHCYL1/IRBIT to ITPR1. Reduces ITPR1-mediated calcium release from the endoplasmic reticulum cooperatively with AHCYL1/IRBIT under normal cellular conditions. Under apoptotic stress conditions, dissociates from ITPR1 and is displaced from mitochondria-associated endoplasmic reticulum membranes, leading to increased Ca(2+) transfer to mitochondria which promotes apoptosis. Required for the correct formation of the microtubule organizing center during oocyte cell division, potentially via regulation of protein abundance and localization of other microtubule organizing center components such as AURKA and TPX2. The sequence is that of Bcl-2-like protein 10 from Mus musculus (Mouse).